A 161-amino-acid polypeptide reads, in one-letter code: Putative outer membrane protein YedS (161 aa).

The N-terminal stretch at 1–21 (MKRKVLAMLVPALLVAGAANA) is a signal peptide.

Belongs to the Gram-negative porin family.

The protein localises to the cell outer membrane. This chain is Putative outer membrane protein YedS (yedS), found in Escherichia coli (strain K12).